Consider the following 37-residue polypeptide: Large ribosomal subunit protein bL36c (37 aa).

Belongs to the bacterial ribosomal protein bL36 family.

It is found in the plastid. The protein resides in the chloroplast. In Chlorella vulgaris (Green alga), this protein is Large ribosomal subunit protein bL36c (rpl36).